We begin with the raw amino-acid sequence, 370 residues long: 3-isopropylmalate dehydrogenase (370 aa).

77–90 serves as a coordination point for NAD(+); the sequence is GPKWDAVPYEVRPE. R97, R107, R135, and D226 together coordinate substrate. Residues D226, D250, and D254 each contribute to the Mg(2+) site. Position 290-302 (290-302) interacts with NAD(+); that stretch reads GSAPDIAGTGVAN.

It belongs to the isocitrate and isopropylmalate dehydrogenases family. LeuB type 1 subfamily. Homodimer. Requires Mg(2+) as cofactor. Mn(2+) is required as a cofactor.

Its subcellular location is the cytoplasm. It carries out the reaction (2R,3S)-3-isopropylmalate + NAD(+) = 4-methyl-2-oxopentanoate + CO2 + NADH. The protein operates within amino-acid biosynthesis; L-leucine biosynthesis; L-leucine from 3-methyl-2-oxobutanoate: step 3/4. Functionally, catalyzes the oxidation of 3-carboxy-2-hydroxy-4-methylpentanoate (3-isopropylmalate) to 3-carboxy-4-methyl-2-oxopentanoate. The product decarboxylates to 4-methyl-2 oxopentanoate. The protein is 3-isopropylmalate dehydrogenase of Rhizobium meliloti (strain 1021) (Ensifer meliloti).